A 668-amino-acid chain; its full sequence is Biotin biosynthesis bifunctional protein BioWF (668 aa).

Arginine 293 provides a ligand contact to substrate. Residue 380–381 (GY) participates in pyridoxal 5'-phosphate binding. A substrate-binding site is contributed by histidine 405. Pyridoxal 5'-phosphate contacts are provided by residues serine 451, 476-479 (DDAH), and 507-510 (TASK). At lysine 510 the chain carries N6-(pyridoxal phosphate)lysine.

It in the N-terminal section; belongs to the BioW family. In the C-terminal section; belongs to the class-II pyridoxal-phosphate-dependent aminotransferase family. BioF subfamily. In terms of assembly, homodimer. Mg(2+) is required as a cofactor. Requires pyridoxal 5'-phosphate as cofactor.

It catalyses the reaction heptanedioate + ATP + CoA = 6-carboxyhexanoyl-CoA + AMP + diphosphate. It carries out the reaction 6-carboxyhexanoyl-[ACP] + L-alanine + H(+) = (8S)-8-amino-7-oxononanoate + holo-[ACP] + CO2. It functions in the pathway metabolic intermediate metabolism; pimeloyl-CoA biosynthesis; pimeloyl-CoA from pimelate: step 1/1. It participates in cofactor biosynthesis; biotin biosynthesis. In terms of biological role, catalyzes both the decarboxylative condensation of pimeloyl-[acyl-carrier protein] and L-alanine to produce 8-amino-7-oxononanoate (AON), [acyl-carrier protein], and carbon dioxide, and the transformation of pimelate into pimeloyl-CoA with concomitant hydrolysis of ATP to AMP. This chain is Biotin biosynthesis bifunctional protein BioWF, found in Cutibacterium acnes (strain SK137) (Propionibacterium acnes).